The sequence spans 343 residues: Thiamine-phosphate synthase (343 aa).

The interval 1-123 (MQQASPTAIA…GACCKQLRYR (123 aa)) is unknown. Residues 124 to 343 (VYALESGLLG…LLTQLSRINP (220 aa)) form a thiamine-phosphate synthase region. 4-amino-2-methyl-5-(diphosphooxymethyl)pyrimidine contacts are provided by residues 171-175 (QYRDK) and N203. Mg(2+) is bound by residues D204 and D223. S242 is a 4-amino-2-methyl-5-(diphosphooxymethyl)pyrimidine binding site. Residue 268–270 (TPT) participates in 2-[(2R,5Z)-2-carboxy-4-methylthiazol-5(2H)-ylidene]ethyl phosphate binding. Position 271 (K271) interacts with 4-amino-2-methyl-5-(diphosphooxymethyl)pyrimidine. G298 contributes to the 2-[(2R,5Z)-2-carboxy-4-methylthiazol-5(2H)-ylidene]ethyl phosphate binding site.

This sequence belongs to the thiamine-phosphate synthase family. The cofactor is Mg(2+).

The enzyme catalyses 2-[(2R,5Z)-2-carboxy-4-methylthiazol-5(2H)-ylidene]ethyl phosphate + 4-amino-2-methyl-5-(diphosphooxymethyl)pyrimidine + 2 H(+) = thiamine phosphate + CO2 + diphosphate. It catalyses the reaction 2-(2-carboxy-4-methylthiazol-5-yl)ethyl phosphate + 4-amino-2-methyl-5-(diphosphooxymethyl)pyrimidine + 2 H(+) = thiamine phosphate + CO2 + diphosphate. It carries out the reaction 4-methyl-5-(2-phosphooxyethyl)-thiazole + 4-amino-2-methyl-5-(diphosphooxymethyl)pyrimidine + H(+) = thiamine phosphate + diphosphate. It functions in the pathway cofactor biosynthesis; thiamine diphosphate biosynthesis; thiamine phosphate from 4-amino-2-methyl-5-diphosphomethylpyrimidine and 4-methyl-5-(2-phosphoethyl)-thiazole: step 1/1. Functionally, condenses 4-methyl-5-(beta-hydroxyethyl)thiazole monophosphate (THZ-P) and 2-methyl-4-amino-5-hydroxymethyl pyrimidine pyrophosphate (HMP-PP) to form thiamine monophosphate (TMP). In Synechocystis sp. (strain ATCC 27184 / PCC 6803 / Kazusa), this protein is Thiamine-phosphate synthase.